The chain runs to 843 residues: Vacuolar membrane protease (843 aa).

Topologically, residues Met-1–Ala-16 are cytoplasmic. A helical transmembrane segment spans residues Phe-17–Leu-37. Topologically, residues Asp-38–Asn-347 are vacuolar. N-linked (GlcNAc...) asparagine glycans are attached at residues Asn-96, Asn-109, and Asn-117. The Zn(2+) site is built by His-147 and Asp-159. The Proton acceptor role is filled by Glu-191. Glu-192 contributes to the Zn(2+) binding site. N-linked (GlcNAc...) asparagine glycosylation occurs at Asn-209. Glu-217 contributes to the Zn(2+) binding site. Asn-275 carries an N-linked (GlcNAc...) asparagine glycan. Residue His-292 participates in Zn(2+) binding. N-linked (GlcNAc...) asparagine glycosylation is present at Asn-322. The chain crosses the membrane as a helical span at residues Leu-348–Leu-368. Over Thr-369–Thr-386 the chain is Cytoplasmic. A helical membrane pass occupies residues Val-387–Leu-407. Topologically, residues Thr-408–Ser-417 are vacuolar. Residues His-418–Phe-438 traverse the membrane as a helical segment. Topologically, residues Arg-439 to Glu-456 are cytoplasmic. A helical transmembrane segment spans residues Ile-457 to Leu-477. The Vacuolar portion of the chain corresponds to Ser-478 to Gly-484. The chain crosses the membrane as a helical span at residues Ser-485–Ile-505. Topologically, residues Arg-506–Asn-566 are cytoplasmic. Residues Ile-567–Ile-587 form a helical membrane-spanning segment. Residues Leu-588–Lys-608 are Vacuolar-facing. The helical transmembrane segment at Leu-609–Phe-629 threads the bilayer. Residues Arg-630–Ser-636 are Cytoplasmic-facing. Residues Leu-637–Phe-657 traverse the membrane as a helical segment. At Thr-658–Ile-843 the chain is on the vacuolar side. N-linked (GlcNAc...) asparagine glycans are attached at residues Asn-677, Asn-703, Asn-707, Asn-754, and Asn-788.

The protein belongs to the peptidase M28 family. Zn(2+) is required as a cofactor.

It localises to the membrane. Its subcellular location is the vacuole membrane. Its function is as follows. May be involved in vacuolar sorting and osmoregulation. The chain is Vacuolar membrane protease from Schizosaccharomyces pombe (strain 972 / ATCC 24843) (Fission yeast).